We begin with the raw amino-acid sequence, 638 residues long: LIM domain kinase 2 (638 aa).

LIM zinc-binding domains follow at residues 12–63 (CRGC…CHKD) and 72–124 (CHGC…CGKC). In terms of domain architecture, PDZ spans 152-239 (LISMPATTEC…TLQLLIEHDP (88 aa)). Thr-210 is modified (phosphothreonine). The segment covering 257–266 (MQSSGHTLML) has biased composition (polar residues). Positions 257 to 304 (MQSSGHTLMLSTLDAKENQEGTLRRRSLRRSNSISKSPGPSSPKEPLL) are disordered. Residues 270–279 (DAKENQEGTL) are compositionally biased toward basic and acidic residues. Residues 286–304 (RSNSISKSPGPSSPKEPLL) are compositionally biased toward low complexity. Ser-293 and Ser-298 each carry phosphoserine. The region spanning 331–608 (LIHGEVLGKG…DSFEALSLFL (278 aa)) is the Protein kinase domain. ATP contacts are provided by residues 337-345 (LGKGFFGQA) and Lys-360. Asp-451 is an active-site residue. Thr-505 carries the phosphothreonine; by ROCK1 and CDC42BP modification.

Belongs to the protein kinase superfamily. TKL Ser/Thr protein kinase family. Binds ROCK1 and MARF1. Interacts with NISCH. Post-translationally, phosphorylated on serine and/or threonine residues by ROCK1. Found in various tissues at moderate levels, except for testis, which shows very low expression.

It localises to the cytoplasm. The protein localises to the nucleus. Its subcellular location is the perinuclear region. The protein resides in the cytoskeleton. It is found in the spindle. It localises to the microtubule organizing center. The protein localises to the centrosome. It carries out the reaction L-seryl-[protein] + ATP = O-phospho-L-seryl-[protein] + ADP + H(+). The catalysed reaction is L-threonyl-[protein] + ATP = O-phospho-L-threonyl-[protein] + ADP + H(+). In terms of biological role, serine/threonine-protein kinase that plays an essential role in the regulation of actin filament dynamics. Acts downstream of several Rho family GTPase signal transduction pathways. Involved in astral microtubule organization and mitotic spindle orientation during early stages of mitosis by mediating phosphorylation of TPPP. Displays serine/threonine-specific phosphorylation of myelin basic protein and histone (MBP) in vitro. Suppresses ciliogenesis via multiple pathways; phosphorylation of CFL1, directional trafficking of ciliary vesicles to the ciliary base, and by facilitating YAP1 nuclear localization where it acts as a transcriptional corepressor of the TEAD4 target genes AURKA and PLK1. The polypeptide is LIM domain kinase 2 (Limk2) (Rattus norvegicus (Rat)).